Reading from the N-terminus, the 254-residue chain is 14-3-3-like protein GF14 epsilon (254 aa).

A phosphoserine mark is found at serine 65 and serine 188.

The protein belongs to the 14-3-3 family. Interacts with DREB1A and DREB1B in the nucleus. Interacts with CINV1.

The protein localises to the nucleus. It is found in the cytoplasm. Its function is as follows. Is associated with a DNA binding complex that binds to the G box, a well-characterized cis-acting DNA regulatory element found in plant genes. In Arabidopsis thaliana (Mouse-ear cress), this protein is 14-3-3-like protein GF14 epsilon (GRF10).